A 263-amino-acid polypeptide reads, in one-letter code: Hydroxyethylthiazole kinase (263 aa).

M45 is a binding site for substrate. Residues R121 and S167 each coordinate ATP. G194 serves as a coordination point for substrate.

This sequence belongs to the Thz kinase family. The cofactor is Mg(2+).

It carries out the reaction 5-(2-hydroxyethyl)-4-methylthiazole + ATP = 4-methyl-5-(2-phosphooxyethyl)-thiazole + ADP + H(+). It participates in cofactor biosynthesis; thiamine diphosphate biosynthesis; 4-methyl-5-(2-phosphoethyl)-thiazole from 5-(2-hydroxyethyl)-4-methylthiazole: step 1/1. Its function is as follows. Catalyzes the phosphorylation of the hydroxyl group of 4-methyl-5-beta-hydroxyethylthiazole (THZ). This is Hydroxyethylthiazole kinase from Vibrio parahaemolyticus serotype O3:K6 (strain RIMD 2210633).